The chain runs to 360 residues: Peptide chain release factor 1 (360 aa).

Glutamine 235 carries the N5-methylglutamine modification.

Belongs to the prokaryotic/mitochondrial release factor family. Post-translationally, methylated by PrmC. Methylation increases the termination efficiency of RF1.

Its subcellular location is the cytoplasm. Its function is as follows. Peptide chain release factor 1 directs the termination of translation in response to the peptide chain termination codons UAG and UAA. The protein is Peptide chain release factor 1 of Delftia acidovorans (strain DSM 14801 / SPH-1).